Reading from the N-terminus, the 417-residue chain is Lysosome-associated membrane glycoprotein 1 (417 aa).

An N-terminal signal peptide occupies residues 1-28 (MAAPGSARRPLLLLLLLLLLGLMHCASA). The interval 29-194 (AMFMVKNGNG…SRGETRCEQD (166 aa)) is first lumenal domain. At 29 to 382 (AMFMVKNGNG…EECLLDENSM (354 aa)) the chain is on the lumenal side. Residues Asn-37 and Asn-45 are each glycosylated (N-linked (GlcNAc...) asparagine). Residues Cys-41 and Cys-80 are joined by a disulfide bond. N-linked (GlcNAc...) (polylactosaminoglycan) asparagine glycosylation is present at Asn-62. 4 N-linked (GlcNAc...) asparagine glycosylation sites follow: Asn-76, Asn-84, Asn-103, and Asn-107. Residues Asn-121 and Asn-130 are each glycosylated (N-linked (GlcNAc...) (polylactosaminoglycan) asparagine). A disulfide bridge connects residues Cys-155 and Cys-191. N-linked (GlcNAc...) asparagine glycans are attached at residues Asn-165 and Asn-181. Positions 184–221 (FSRGETRCEQDRPSPTTAPPAPPSPSPSPVPKSPSVDK) are disordered. The hinge stretch occupies residues 195–227 (RPSPTTAPPAPPSPSPSPVPKSPSVDKYNVSGT). Ser-197 carries O-linked (GalNAc...) serine; partial glycosylation. Thr-199 and Thr-200 each carry an O-linked (GalNAc...) threonine glycan. Pro residues predominate over residues 199–215 (TTAPPAPPSPSPSPVPK). O-linked (GalNAc...) serine glycans are attached at residues Ser-207, Ser-209, and Ser-211. N-linked (GlcNAc...) (polylactosaminoglycan) asparagine glycans are attached at residues Asn-223 and Asn-228. Positions 228–382 (NGTCLLASMG…EECLLDENSM (155 aa)) are second lumenal domain. Cysteines 231 and 269 form a disulfide. Asn-241, Asn-249, Asn-261, Asn-293, and Asn-322 each carry an N-linked (GlcNAc...) asparagine glycan. Cysteines 338 and 375 form a disulfide. Residues 383 to 410 (LIPIAVGGALAGLVLIVLIAYLVGRKRS) traverse the membrane as a helical segment. The Cytoplasmic portion of the chain corresponds to 411–417 (HAGYQTI).

The protein belongs to the LAMP family. Interacts with ABCB9; this interaction strongly stabilizes ABCB9 and protects ABCB9 against lysosomal degradation. Interacts with FURIN. Interacts with TMEM175; inhibiting the proton channel activity of TMEM175. In terms of assembly, (Microbial infection) Interacts with Lassa virus protein glycoprotein. As to quaternary structure, (Microbial infection) Interacts with mumps virus protein F; this interaction promotes protein F cleavage by FURIN. Post-translationally, O- and N-glycosylated; some of the 18 N-linked glycans are polylactosaminoglycans. (Microbial infection) The glycosylation of Asn-76 is essential for Lassa virus entry into cells.

It localises to the lysosome membrane. It is found in the endosome membrane. The protein localises to the late endosome membrane. The protein resides in the cell membrane. Its subcellular location is the cytolytic granule membrane. Its function is as follows. Lysosomal membrane glycoprotein which plays an important role in lysosome biogenesis, lysosomal pH regulation, autophagy and cholesterol homeostasis. Acts as an important regulator of lysosomal lumen pH regulation by acting as a direct inhibitor of the proton channel TMEM175, facilitating lysosomal acidification for optimal hydrolase activity. Also plays an important role in NK-cells cytotoxicity. Mechanistically, participates in cytotoxic granule movement to the cell surface and perforin trafficking to the lytic granule. In addition, protects NK-cells from degranulation-associated damage induced by their own cytotoxic granule content. Presents carbohydrate ligands to selectins. Functionally, (Microbial infection) Acts as a receptor for Lassa virus glycoprotein. Also promotes fusion of the virus with host membrane in less acidic endosomes. (Microbial infection) Supports the FURIN-mediated cleavage of mumps virus fusion protein F by interacting with both FURIN and the unprocessed form but not the processed form of the viral protein F. This Homo sapiens (Human) protein is Lysosome-associated membrane glycoprotein 1.